Here is a 160-residue protein sequence, read N- to C-terminus: MTEQTKRTTIVLFSGDYDKAMAAYIIANGAAAYDHEVTIFHTFWGFNALRKEELIPVKKGFLEKMFGKMMPRGADKMGLSKMNFAGMGPKMIKNVMKKHNVLTLPQLIEMAQEQGVKLVACTMTMDLLGLQEKELLDDIDYAGVAAYLADAEEGSVNLFI.

This is an uncharacterized protein from Bacillus subtilis (strain 168).